A 448-amino-acid polypeptide reads, in one-letter code: 5-hydroxytryptamine receptor 7 (448 aa).

Residues 1–86 (MMDVNSSGRP…INYGRVEKVV (86 aa)) are Extracellular-facing. Asn-5 and Asn-69 each carry an N-linked (GlcNAc...) asparagine glycan. A helical transmembrane segment spans residues 87–111 (IGSILTLITLLTIAGNCLVVISVCF). The Cytoplasmic portion of the chain corresponds to 112-121 (VKKLRQPSNY). Residues 122-143 (LIVSLALADLSVAVAVMPFVSV) form a helical membrane-spanning segment. Topologically, residues 144-155 (TDLIGGKWIFGH) are extracellular. A helical membrane pass occupies residues 156–181 (FFCNVFIAMDVMCCTASIMTLCVISI). Cys-158 and Cys-234 form a disulfide bridge. Asp-165 is a serotonin binding site. Topologically, residues 182–201 (DRYLGITRPLTYPVRQNGKC) are cytoplasmic. The chain crosses the membrane as a helical span at residues 202 to 222 (MAKMILSVWLLSASITLPPLF). The Extracellular segment spans residues 223 to 240 (GWAQNVNDDKVCLISQDF). Residues 241 to 263 (GYTIYSTAVAFYIPMSVMLFMYY) form a helical membrane-spanning segment. Residues 264-329 (QIYKAARKSA…SIFKREQKAA (66 aa)) lie on the Cytoplasmic side of the membrane. The helical transmembrane segment at 330–355 (TTLGIIVGAFTVCWLPFFLLSTARPF) threads the bilayer. Residues 356–366 (ICGTSCSCIPL) lie on the Extracellular side of the membrane. The chain crosses the membrane as a helical span at residues 367–390 (WVERTCLWLGYANSLINPFIYAFF). Over 391–448 (NRDLRTTYRSLLQCQYRNINRKLSAAGMHEALKLAERPERSEFVLQNSDHCGKKGHDT) the chain is Cytoplasmic. Cys-404 carries S-palmitoyl cysteine lipidation.

It belongs to the G-protein coupled receptor 1 family. In terms of tissue distribution, thalamus, hypothalamus, and the hippocampal rudiments.

Its subcellular location is the cell membrane. In terms of biological role, G-protein coupled receptor for 5-hydroxytryptamine (serotonin), a biogenic hormone that functions as a neurotransmitter, a hormone and a mitogen. Ligand binding causes a conformation change that triggers signaling via guanine nucleotide-binding proteins (G proteins) and modulates the activity of downstream effectors. HTR7 is coupled to G(s) G alpha proteins and mediates activation of adenylate cyclase activity. In Rattus norvegicus (Rat), this protein is 5-hydroxytryptamine receptor 7.